Here is a 253-residue protein sequence, read N- to C-terminus: Alpha-acetolactate decarboxylase (253 aa).

The protein belongs to the alpha-acetolactate decarboxylase family.

It carries out the reaction (2S)-2-acetolactate + H(+) = (R)-acetoin + CO2. It functions in the pathway polyol metabolism; (R,R)-butane-2,3-diol biosynthesis; (R,R)-butane-2,3-diol from pyruvate: step 2/3. In terms of biological role, converts acetolactate into acetoin. The sequence is that of Alpha-acetolactate decarboxylase (alsD) from Bacillus licheniformis (strain ATCC 14580 / DSM 13 / JCM 2505 / CCUG 7422 / NBRC 12200 / NCIMB 9375 / NCTC 10341 / NRRL NRS-1264 / Gibson 46).